The following is a 129-amino-acid chain: Large ribosomal subunit protein bL19 (129 aa).

Functionally, this protein is located at the 30S-50S ribosomal subunit interface and may play a role in the structure and function of the aminoacyl-tRNA binding site. The sequence is that of Large ribosomal subunit protein bL19 from Rhodopseudomonas palustris (strain ATCC BAA-98 / CGA009).